The chain runs to 430 residues: ETS domain-containing protein Elk-4 (430 aa).

A DNA-binding region (ETS) is located at residues 5 to 85 (ITLWQFLLQL…NGQKFVYKFV (81 aa)). Positions 116 to 127 (SKDVEYGGKERP) are enriched in basic and acidic residues. The disordered stretch occupies residues 116 to 138 (SKDVEYGGKERPPQPGAKTSSRN). Residue Lys166 forms a Glycyl lysine isopeptide (Lys-Gly) (interchain with G-Cter in SUMO2) linkage. Disordered stretches follow at residues 245–279 (TTFNPTPPVPSTPLPLKEPPRTPSPPLSSNPDIDT) and 292–325 (PENLSLEPKNEDSALPEKDKTNNSSRSKKPKGLE). Positions 249–272 (PTPPVPSTPLPLKEPPRTPSPPLS) are enriched in pro residues. Basic and acidic residues predominate over residues 299 to 312 (PKNEDSALPEKDKT).

The protein belongs to the ETS family. Interacts with SIRT7. Lung and liver.

It is found in the nucleus. Involved in both transcriptional activation and repression. Interaction with SIRT7 leads to recruitment and stabilization of SIRT7 at promoters, followed by deacetylation of histone H3 at 'Lys-18' (H3K18Ac) and subsequent transcription repression. Forms a ternary complex with the serum response factor (SRF). Requires DNA-bound SRF for ternary complex formation and makes extensive DNA contacts to the 5'side of SRF, but does not bind DNA autonomously. The polypeptide is ETS domain-containing protein Elk-4 (Elk4) (Mus musculus (Mouse)).